The following is a 154-amino-acid chain: Ribonuclease HI (154 aa).

The 142-residue stretch at 1-142 (MPKQIEIFTD…CDELAKKGAE (142 aa)) folds into the RNase H type-1 domain. D10, E48, D70, and D134 together coordinate Mg(2+).

It belongs to the RNase H family. As to quaternary structure, monomer. Requires Mg(2+) as cofactor.

Its subcellular location is the cytoplasm. It catalyses the reaction Endonucleolytic cleavage to 5'-phosphomonoester.. Functionally, endonuclease that specifically degrades the RNA of RNA-DNA hybrids. This Haemophilus influenzae (strain ATCC 51907 / DSM 11121 / KW20 / Rd) protein is Ribonuclease HI (rnhA).